Consider the following 76-residue polypeptide: Demidefensin-3 (76 aa).

Positions 1–22 (MRTLALHTAMLLLVALHAQAEA) are cleaved as a signal peptide. A propeptide spanning residues 23–64 (RQARADEAAAQQQPGADDQGMAHSFTWPENAALPLSESERGL) is cleaved from the precursor. The tract at residues 25 to 45 (ARADEAAAQQQPGADDQGMAH) is disordered. The segment covering 30-44 (AAAQQQPGADDQGMA) has biased composition (low complexity). Residues Cys-68 and Cys-73 are joined by a disulfide bond. Residues 74 to 76 (RLL) constitute a propeptide that is removed on maturation.

This sequence belongs to the alpha-defensin family. Theta subfamily. In terms of assembly, forms a cyclic homodimer; disulfide-linked. This is a cyclic peptide.

Its function is as follows. Has antimicrobial activities against bacteria and fungi. This is Demidefensin-3 from Macaca mulatta (Rhesus macaque).